We begin with the raw amino-acid sequence, 301 residues long: Methionyl-tRNA formyltransferase (301 aa).

Position 109-112 (109-112 (SLLP)) interacts with (6S)-5,6,7,8-tetrahydrofolate.

This sequence belongs to the Fmt family.

It carries out the reaction L-methionyl-tRNA(fMet) + (6R)-10-formyltetrahydrofolate = N-formyl-L-methionyl-tRNA(fMet) + (6S)-5,6,7,8-tetrahydrofolate + H(+). In terms of biological role, attaches a formyl group to the free amino group of methionyl-tRNA(fMet). The formyl group appears to play a dual role in the initiator identity of N-formylmethionyl-tRNA by promoting its recognition by IF2 and preventing the misappropriation of this tRNA by the elongation apparatus. This is Methionyl-tRNA formyltransferase from Jannaschia sp. (strain CCS1).